The primary structure comprises 190 residues: uncharacterized protein (190 aa).

An HTH tetR-type domain is found at 1 to 58 (MDKRILAETFRLIKQKGFSFTMNDLAAALGTSKRTLYAYYSSKDQLVEAVVEQFIAEM). Residues 21–40 (TMNDLAAALGTSKRTLYAYY) constitute a DNA-binding region (H-T-H motif).

This is an uncharacterized protein from Bacillus subtilis (strain 168).